We begin with the raw amino-acid sequence, 345 residues long: MKRCTKLKILNTFSVDVYAEKVIIINDEYSLLQLWKQSRDQDKFFLILGAGSNVLFLENYKGIVLLNRIKGIFVTENKVAWYLHVGAGEEWNTLVMYTIKRNMPGLENLVCIPGYVGAALIQNIGAYGVELSQMCEYVDVLDLNQGDKIRLYCHECCFRYRESIFKLNLYKYAILFVGLRINKHWKPVLSYSGLTHLNLNSITPRQIINTIIFLRYKKLPNPIIHGNVGSFFKNPVVDFKVVSFLLKKYSNIPYYFQEDGKVKLLAGWLIENCNLKGYILGEASVYYKQALVLINTRQKATGTEIAALALYVYNKVVDKFNIRLKPEVRLIGSFGEINPKKLFLK.

The region spanning 15–218 (VDVYAEKVII…NTIIFLRYKK (204 aa)) is the FAD-binding PCMH-type domain. The active site involves Arg-161. Ser-230 serves as the catalytic Proton donor. Glu-327 is a catalytic residue.

Belongs to the MurB family. FAD serves as cofactor.

The protein localises to the cytoplasm. The catalysed reaction is UDP-N-acetyl-alpha-D-muramate + NADP(+) = UDP-N-acetyl-3-O-(1-carboxyvinyl)-alpha-D-glucosamine + NADPH + H(+). It participates in cell wall biogenesis; peptidoglycan biosynthesis. Its function is as follows. Cell wall formation. This chain is UDP-N-acetylenolpyruvoylglucosamine reductase, found in Blochmanniella floridana.